A 437-amino-acid polypeptide reads, in one-letter code: Protein translocase subunit SecY (437 aa).

Helical transmembrane passes span 19-39, 69-89, 122-142, 157-177, 189-209, 219-239, 275-295, 318-338, 378-398, and 400-420; these read LFTL…IPGV, LLQI…SIIL, VALA…GALF, IFTT…VMWL, GMSI…LWAI, WIEF…VVFV, GVIP…IVQF, HIIL…AISF, GSLY…GFGA, and QNFP…LETV.

The protein belongs to the SecY/SEC61-alpha family. Component of the Sec protein translocase complex. Heterotrimer consisting of SecY, SecE and SecG subunits. The heterotrimers can form oligomers, although 1 heterotrimer is thought to be able to translocate proteins. Interacts with the ribosome. Interacts with SecDF, and other proteins may be involved. Interacts with SecA.

It is found in the cell membrane. The central subunit of the protein translocation channel SecYEG. Consists of two halves formed by TMs 1-5 and 6-10. These two domains form a lateral gate at the front which open onto the bilayer between TMs 2 and 7, and are clamped together by SecE at the back. The channel is closed by both a pore ring composed of hydrophobic SecY resides and a short helix (helix 2A) on the extracellular side of the membrane which forms a plug. The plug probably moves laterally to allow the channel to open. The ring and the pore may move independently. In Streptomyces coelicolor (strain ATCC BAA-471 / A3(2) / M145), this protein is Protein translocase subunit SecY.